Here is a 163-residue protein sequence, read N- to C-terminus: Cytosolic iron-sulfur assembly component 2B (163 aa).

Belongs to the MIP18 family.

The protein resides in the nucleus. Its subcellular location is the cytoplasm. It localises to the cytoskeleton. The protein localises to the spindle. Its function is as follows. Component of the cytosolic iron-sulfur (Fe/S) protein assembly machinery. Required for the maturation of extramitochondrial Fe/S proteins. May play a role in chromosome segregation through establishment of sister chromatid cohesion. The protein is Cytosolic iron-sulfur assembly component 2B of Dictyostelium discoideum (Social amoeba).